Consider the following 329-residue polypeptide: Cytosolic arginine sensor for mTORC1 subunit 1 (329 aa).

Serine 14 carries the post-translational modification Phosphoserine. ACT domains lie at 72–138 (AEAT…HTLA) and 260–321 (GELW…EVLQ). L-arginine contacts are provided by residues 111-112 (SV), glycine 274, 280-281 (IV), and 300-304 (TFNFD).

It belongs to the GATS family. Forms homodimers and heterodimers with CASTOR2. Interacts with the GATOR2 complex which is composed of MIOS, SEC13, SEH1L, WDR24 and WDR59; the interaction is negatively regulated by arginine. Interacts with TM4SF5; the interaction is positively regulated by leucine and is negatively regulated by arginine. In terms of processing, phosphorylation at Ser-14 by AKT1, promoting the interaction between CASTOR1 and RNF167. Post-translationally, ubiquitinated by RNF167 via 'Lys-29'-polyubiquitination, leading to its degradation, releasing the GATOR2 complex. Ubiquitination by RNF167 is promoted by phosphorylation at Ser-14 by AKT1.

It localises to the cytoplasm. The protein resides in the cytosol. Its function is as follows. Functions as an intracellular arginine sensor within the amino acid-sensing branch of the TORC1 signaling pathway. As a homodimer or a heterodimer with CASTOR2, binds and inhibits the GATOR subcomplex GATOR2 and thereby mTORC1. Binding of arginine to CASTOR1 allosterically disrupts the interaction of CASTOR1-containing dimers with GATOR2 which can in turn activate mTORC1 and the TORC1 signaling pathway. This chain is Cytosolic arginine sensor for mTORC1 subunit 1, found in Pongo abelii (Sumatran orangutan).